A 464-amino-acid polypeptide reads, in one-letter code: F-box/WD repeat-containing protein 12 (464 aa).

Residues 1–45 form the F-box domain; the sequence is MEIRLPDLALKRIFSFLDLFGLLQVSQVNKHWNRIADSDYLWRSL. WD repeat units lie at residues 89-132, 136-174, 178-217, 222-263, 270-315, 320-367, 370-407, and 416-461; these read YKVT…CAWD, GTMI…KVWN, RDAL…YTFT, RDVS…FLTE, EGSV…ITFD, KTGG…LLFS, GFLL…YMWE, and RSCC…VMYS.

As to quaternary structure, interacts with SKP1. Interacts with CUL1. Interacts with IL22RA1. Ubiquitously expressed.

It participates in protein modification; protein ubiquitination. Substrate-recognition component of the SCF (SKP1-CUL1-F-box protein)-type E3 ubiquitin ligase complex. Promotes degradation of interleukin-22 receptor subunit IL22RA1 in resting and IL22-stimulated conditions by facilitating its ubiquitination. Functions as a cell growth suppressor. The sequence is that of F-box/WD repeat-containing protein 12 (FBXW12) from Homo sapiens (Human).